The sequence spans 526 residues: Variant surface glycoprotein MITAT 1.4A (526 aa).

The N-terminal stretch at 1–33 (MDCHTKETLGVTQWRRSTMLTLSLLYAITPADG) is a signal peptide. Cystine bridges form between cysteine 47–cysteine 173 and cysteine 154–cysteine 215. The segment at 157 to 193 (NEGGDGDGKDQLAPKGCRHGTEADFDAGAGPAESEVA) is disordered. Asparagine 453 carries an N-linked (GlcNAc...) asparagine glycan. Aspartate 503 carries GPI-anchor amidated aspartate lipidation. Residues 504 to 526 (SSILVTKKFALTVVSAAFVALLF) constitute a propeptide, removed in mature form.

Its subcellular location is the cell membrane. VSG forms a coat on the surface of the parasite. The trypanosome evades the immune response of the host by expressing a series of antigenically distinct VSGs from an estimated 1000 VSG genes. This chain is Variant surface glycoprotein MITAT 1.4A, found in Trypanosoma brucei brucei.